Consider the following 393-residue polypeptide: 1-deoxy-D-xylulose 5-phosphate reductoisomerase (393 aa).

NADPH-binding residues include Thr-10, Gly-11, Ser-12, Ile-13, Arg-37, and Asn-124. 1-deoxy-D-xylulose 5-phosphate is bound at residue Lys-125. Residue Glu-126 participates in NADPH binding. Residue Asp-150 participates in Mn(2+) binding. Residues Ser-151, Glu-152, Ser-182, and His-205 each coordinate 1-deoxy-D-xylulose 5-phosphate. Glu-152 is a Mn(2+) binding site. Position 211 (Gly-211) interacts with NADPH. Positions 218, 223, 224, and 227 each coordinate 1-deoxy-D-xylulose 5-phosphate. Glu-227 serves as a coordination point for Mn(2+).

Belongs to the DXR family. It depends on Mg(2+) as a cofactor. Requires Mn(2+) as cofactor.

It catalyses the reaction 2-C-methyl-D-erythritol 4-phosphate + NADP(+) = 1-deoxy-D-xylulose 5-phosphate + NADPH + H(+). It functions in the pathway isoprenoid biosynthesis; isopentenyl diphosphate biosynthesis via DXP pathway; isopentenyl diphosphate from 1-deoxy-D-xylulose 5-phosphate: step 1/6. Its function is as follows. Catalyzes the NADPH-dependent rearrangement and reduction of 1-deoxy-D-xylulose-5-phosphate (DXP) to 2-C-methyl-D-erythritol 4-phosphate (MEP). In Nitrosococcus oceani (strain ATCC 19707 / BCRC 17464 / JCM 30415 / NCIMB 11848 / C-107), this protein is 1-deoxy-D-xylulose 5-phosphate reductoisomerase.